Consider the following 325-residue polypeptide: Pyruvate dehydrogenase E1 component subunit beta (325 aa).

Residue Glu-60 participates in thiamine diphosphate binding.

As to quaternary structure, heterodimer of an alpha and a beta chain. The cofactor is thiamine diphosphate.

It catalyses the reaction N(6)-[(R)-lipoyl]-L-lysyl-[protein] + pyruvate + H(+) = N(6)-[(R)-S(8)-acetyldihydrolipoyl]-L-lysyl-[protein] + CO2. Functionally, the pyruvate dehydrogenase complex catalyzes the overall conversion of pyruvate to acetyl-CoA and CO(2). It contains multiple copies of three enzymatic components: pyruvate dehydrogenase (E1), dihydrolipoamide acetyltransferase (E2) and lipoamide dehydrogenase (E3). The polypeptide is Pyruvate dehydrogenase E1 component subunit beta (pdhB) (Staphylococcus epidermidis (strain ATCC 35984 / DSM 28319 / BCRC 17069 / CCUG 31568 / BM 3577 / RP62A)).